A 529-amino-acid chain; its full sequence is Bifunctional purine biosynthesis protein PurH (529 aa).

An MGS-like domain is found at methionine 1–valine 148. Residue lysine 287 is modified to N6-acetyllysine.

Belongs to the PurH family.

It carries out the reaction (6R)-10-formyltetrahydrofolate + 5-amino-1-(5-phospho-beta-D-ribosyl)imidazole-4-carboxamide = 5-formamido-1-(5-phospho-D-ribosyl)imidazole-4-carboxamide + (6S)-5,6,7,8-tetrahydrofolate. It catalyses the reaction IMP + H2O = 5-formamido-1-(5-phospho-D-ribosyl)imidazole-4-carboxamide. It functions in the pathway purine metabolism; IMP biosynthesis via de novo pathway; 5-formamido-1-(5-phospho-D-ribosyl)imidazole-4-carboxamide from 5-amino-1-(5-phospho-D-ribosyl)imidazole-4-carboxamide (10-formyl THF route): step 1/1. It participates in purine metabolism; IMP biosynthesis via de novo pathway; IMP from 5-formamido-1-(5-phospho-D-ribosyl)imidazole-4-carboxamide: step 1/1. This is Bifunctional purine biosynthesis protein PurH from Escherichia coli O9:H4 (strain HS).